A 200-amino-acid chain; its full sequence is Large ribosomal subunit protein uL4 (200 aa).

Residues 43–71 (RAQKTRAEVSGSGKKPWRQKGTGRARSGD) form a disordered region.

The protein belongs to the universal ribosomal protein uL4 family. In terms of assembly, part of the 50S ribosomal subunit.

One of the primary rRNA binding proteins, this protein initially binds near the 5'-end of the 23S rRNA. It is important during the early stages of 50S assembly. It makes multiple contacts with different domains of the 23S rRNA in the assembled 50S subunit and ribosome. In terms of biological role, forms part of the polypeptide exit tunnel. The protein is Large ribosomal subunit protein uL4 of Pasteurella multocida (strain Pm70).